Consider the following 190-residue polypeptide: MTYEIQASVREAQGTGASRRLRREGQIPGILYGEGQEPVAIAVDHKTVFYALEKESFHTALIKLSLNGETKDVIVRDFQMHPFRREVQHIDFQAVKADQLVRIRVPLHIVNAENSQAVKLQGGRVSLLNTAVEVLALPANIPAFLDLDCAEVVAGDILHLSDIKLPEGVESVSLKRNENLAVATVTGKKR.

Belongs to the bacterial ribosomal protein bL25 family. CTC subfamily. As to quaternary structure, part of the 50S ribosomal subunit; part of the 5S rRNA/L5/L18/L25 subcomplex. Contacts the 5S rRNA. Binds to the 5S rRNA independently of L5 and L18.

This is one of the proteins that binds to the 5S RNA in the ribosome where it forms part of the central protuberance. The protein is Large ribosomal subunit protein bL25 of Neisseria gonorrhoeae (strain ATCC 700825 / FA 1090).